A 601-amino-acid chain; its full sequence is Glutathione-regulated potassium-efflux system protein KefB (601 aa).

13 consecutive transmembrane segments (helical) span residues 4–24 (ADLL…VPLA), 29–49 (IGAV…GLGF), 55–75 (EILH…GLEL), 87–107 (IFGV…GLLM), 111–131 (FLWQ…TAMA), 152–172 (VLLF…LLAG), 177–197 (HFDW…LIGG), 207–227 (FIAA…LVLS), 230–250 (LFMD…GVLL), 262–282 (AIDP…GMSL), 284–304 (LGVL…LVVI), 324–344 (MQFA…FSTA), and 356–376 (ALLL…MKGI). The region spanning 400–519 (KPQVIVVGFG…AGVTQFSRET (120 aa)) is the RCK N-terminal domain.

This sequence belongs to the monovalent cation:proton antiporter 2 (CPA2) transporter (TC 2.A.37) family. KefB subfamily. In terms of assembly, interacts with the regulatory subunit KefG.

The protein localises to the cell inner membrane. Its function is as follows. Pore-forming subunit of a potassium efflux system that confers protection against electrophiles. Catalyzes K(+)/H(+) antiport. The sequence is that of Glutathione-regulated potassium-efflux system protein KefB from Salmonella paratyphi B (strain ATCC BAA-1250 / SPB7).